The following is a 281-amino-acid chain: ATP synthase subunit a (281 aa).

A run of 7 helical transmembrane segments spans residues 56–76, 117–137, 144–164, 181–201, 215–235, 237–257, and 259–279; these read KPML…WAAF, LVVS…IPVA, IIAY…TLTF, KSLG…NILI, FAGH…LNGV, IAYA…ELFI, and ALQA…AMAE.

The protein belongs to the ATPase A chain family. As to quaternary structure, F-type ATPases have 2 components, CF(1) - the catalytic core - and CF(0) - the membrane proton channel. CF(1) has five subunits: alpha(3), beta(3), gamma(1), delta(1), epsilon(1). CF(0) has three main subunits: a(1), b(2) and c(9-12). The alpha and beta chains form an alternating ring which encloses part of the gamma chain. CF(1) is attached to CF(0) by a central stalk formed by the gamma and epsilon chains, while a peripheral stalk is formed by the delta and b chains.

It localises to the cell membrane. Its function is as follows. Key component of the proton channel; it plays a direct role in the translocation of protons across the membrane. This is ATP synthase subunit a from Streptomyces lividans.